We begin with the raw amino-acid sequence, 156 residues long: Small ribosomal subunit protein uS7 (156 aa).

Belongs to the universal ribosomal protein uS7 family. In terms of assembly, part of the 30S ribosomal subunit. Contacts proteins S9 and S11.

One of the primary rRNA binding proteins, it binds directly to 16S rRNA where it nucleates assembly of the head domain of the 30S subunit. Is located at the subunit interface close to the decoding center, probably blocks exit of the E-site tRNA. This Dehalococcoides mccartyi (strain ATCC BAA-2100 / JCM 16839 / KCTC 5957 / BAV1) protein is Small ribosomal subunit protein uS7.